The chain runs to 394 residues: NAD(P)H-quinone oxidoreductase subunit H (394 aa).

It belongs to the complex I 49 kDa subunit family. NDH-1 can be composed of about 15 different subunits; different subcomplexes with different compositions have been identified which probably have different functions.

The protein localises to the cellular thylakoid membrane. It catalyses the reaction a plastoquinone + NADH + (n+1) H(+)(in) = a plastoquinol + NAD(+) + n H(+)(out). It carries out the reaction a plastoquinone + NADPH + (n+1) H(+)(in) = a plastoquinol + NADP(+) + n H(+)(out). Functionally, NDH-1 shuttles electrons from an unknown electron donor, via FMN and iron-sulfur (Fe-S) centers, to quinones in the respiratory and/or the photosynthetic chain. The immediate electron acceptor for the enzyme in this species is believed to be plastoquinone. Couples the redox reaction to proton translocation, and thus conserves the redox energy in a proton gradient. Cyanobacterial NDH-1 also plays a role in inorganic carbon-concentration. In Trichodesmium erythraeum (strain IMS101), this protein is NAD(P)H-quinone oxidoreductase subunit H.